The sequence spans 832 residues: SID1 transmembrane family member 2 (832 aa).

A signal peptide spans 1 to 18; sequence MIAWRLPLCVLLVASVES. Topologically, residues 19-293 are extracellular; sequence HLGALGPKNV…VSQAVTSEAY (275 aa). N-linked (GlcNAc...) asparagine glycosylation is found at Asn27, Asn54, Asn60, Asn123, Asn141, and Asn165. A helical transmembrane segment spans residues 294-314; that stretch reads VGGMLFCLGIFLSFYLLTVLL. Over 315 to 447 the chain is Cytoplasmic; it reads ACWENWRQRK…DKRVLRKKYQ (133 aa). Residues Ser401, Ser403, and Ser404 each carry the phosphoserine modification. Residues 448-468 traverse the membrane as a helical segment; the sequence is IYFWNIATIAVFYALPVVQLV. Topologically, residues 469–499 are extracellular; it reads ITYQTVVNVTGNQDICYYNFLCAHPLGNLSA. Residues Asn476 and Asn496 are each glycosylated (N-linked (GlcNAc...) asparagine). The chain crosses the membrane as a helical span at residues 500–520; that stretch reads FNNILSNLGYILLGLLFLLII. Topologically, residues 521 to 546 are cytoplasmic; it reads LQREINHNRALLRNDLYALECGIPKH. Residues 547 to 567 traverse the membrane as a helical segment; that stretch reads FGLFYAMGTALMMEGLLSACY. Residues 568-605 are Extracellular-facing; it reads HVCPNYTNFQFDTSFMYMIAGLCMLKLYQKRHPDINAS. 2 N-linked (GlcNAc...) asparagine glycosylation sites follow: Asn572 and Asn603. A helical transmembrane segment spans residues 606-626; it reads AYSAYACLAIVIFFSVLGVVF. Residues 627-631 lie on the Cytoplasmic side of the membrane; that stretch reads GKGNT. The helical transmembrane segment at 632 to 652 threads the bilayer; that stretch reads AFWIVFSVIHIISTLLLSTQL. Over 653-688 the chain is Extracellular; the sequence is YYMGRWKLDSGIFRRILHVLYTDCIRQCSGPLYTDR. A helical membrane pass occupies residues 689–709; that stretch reads MVLLVMGNIINWSLAAYGLIM. Topologically, residues 710–715 are cytoplasmic; the sequence is RPNDFA. Residues 716–736 form a helical membrane-spanning segment; that stretch reads SYLLAIGICNLLLYFAFYIIM. Residues 737-746 lie on the Extracellular side of the membrane; it reads KLRSGERIKL. A helical membrane pass occupies residues 747–767; it reads IPLLCIVCTSVVWGFALFFFF. Topologically, residues 768-796 are cytoplasmic; that stretch reads QGLSTWQKTPAESREHNRDCILLDFFDDH. A helical transmembrane segment spans residues 797-817; it reads DIWHFLSSIAMFGSFLVLLTL. At 818–832 the chain is on the extracellular side; that stretch reads DDDLDTVQRDKIYVF.

This sequence belongs to the SID1 family. As to quaternary structure, interacts with adapter protein complex 1 (AP-1) and AP-2, but not AP-3 and AP-4. Interacts with LAMP2. Post-translationally, glycosylated. Widely expressed, including in the liver, brain and kidney (at protein level).

The protein localises to the lysosome membrane. Its subcellular location is the cell membrane. In terms of biological role, mediates the translocation of RNA and DNA across the lysosomal membrane during RNA and DNA autophagy (RDA), a process in which RNA and DNA is directly imported into lysosomes in an ATP-dependent manner, and degraded. Involved in the uptake of single-stranded oligonucleotides by living cells, a process called gymnosis. In vitro, mediates the uptake of linear DNA more efficiently than that of circular DNA, but exhibits similar uptake efficacy toward RNA and DNA. Binds long double-stranded RNA (dsRNA) (500 - 700 base pairs), but not dsRNA shorter than 100 bp. The protein is SID1 transmembrane family member 2 (Sidt2) of Mus musculus (Mouse).